The chain runs to 286 residues: Ribosomal RNA small subunit methyltransferase H (286 aa).

Residues 17-19 (AGH), D36, F63, D84, and Q91 each bind S-adenosyl-L-methionine.

This sequence belongs to the methyltransferase superfamily. RsmH family.

Its subcellular location is the cytoplasm. It carries out the reaction cytidine(1402) in 16S rRNA + S-adenosyl-L-methionine = N(4)-methylcytidine(1402) in 16S rRNA + S-adenosyl-L-homocysteine + H(+). Specifically methylates the N4 position of cytidine in position 1402 (C1402) of 16S rRNA. The sequence is that of Ribosomal RNA small subunit methyltransferase H from Metamycoplasma arthritidis (strain 158L3-1) (Mycoplasma arthritidis).